The primary structure comprises 1944 residues: Anaphase-promoting complex subunit 1 (1944 aa).

Residues serine 51 and serine 60 each carry the phosphoserine modification. Threonine 291 is modified (phosphothreonine). The interval 312-343 (ESPVASPFQNYSSIHSQSRSTSSPSLHSRSPS) is disordered. Phosphoserine occurs at positions 313, 341, 343, 355, 362, 373, and 377. Low complexity predominate over residues 323 to 343 (SSIHSQSRSTSSPSLHSRSPS). A disordered region spans residues 370 to 395 (NLSSHSQSPKRHSISHSPSGSFNDSF). Residues 384–393 (SHSPSGSFND) show a composition bias toward polar residues. Threonine 537 carries the phosphothreonine modification. Serine 547 and serine 555 each carry phosphoserine. Tyrosine 571 is modified (phosphotyrosine). Phosphoserine is present on residues serine 680, serine 686, and serine 688. The disordered stretch occupies residues 991–1014 (NLPRGKSVLSSEVSSGTEAEEEDD). A compositionally biased stretch (polar residues) spans 998-1007 (VLSSEVSSGT). 4 PC repeats span residues 1297 to 1325 (AAGL…PEQL), 1366 to 1404 (GATL…PEFL), 1467 to 1501 (GACL…YLSA), and 1520 to 1552 (LLSL…EMNY).

Belongs to the APC1 family. The mammalian APC/C is composed at least of 14 distinct subunits ANAPC1, ANAPC2, CDC27/APC3, ANAPC4, ANAPC5, CDC16/APC6, ANAPC7, CDC23/APC8, ANAPC10, ANAPC11, CDC26/APC12, ANAPC13, ANAPC15 and ANAPC16 that assemble into a complex of at least 19 chains with a combined molecular mass of around 1.2 MDa; APC/C interacts with FZR1 and FBXO5. Post-translationally, phosphorylated. Phosphorylation on Ser-355 occurs specifically during mitosis. As to expression, abundantly expressed in proliferating fibroblasts, juvenile testis, adult brain and epididymis.

It participates in protein modification; protein ubiquitination. Component of the anaphase promoting complex/cyclosome (APC/C), a cell cycle-regulated E3 ubiquitin ligase that controls progression through mitosis and the G1 phase of the cell cycle. The APC/C complex acts by mediating ubiquitination and subsequent degradation of target proteins: it mainly mediates the formation of 'Lys-11'-linked polyubiquitin chains and, to a lower extent, the formation of 'Lys-48'- and 'Lys-63'-linked polyubiquitin chains. The APC/C complex catalyzes assembly of branched 'Lys-11'-/'Lys-48'-linked branched ubiquitin chains on target proteins. In Mus musculus (Mouse), this protein is Anaphase-promoting complex subunit 1 (Anapc1).